The following is a 335-amino-acid chain: Glucokinase (335 aa).

ATP is bound at residue A11 to T16.

It belongs to the bacterial glucokinase family.

The protein localises to the cytoplasm. The enzyme catalyses D-glucose + ATP = D-glucose 6-phosphate + ADP + H(+). This Xanthomonas oryzae pv. oryzae (strain MAFF 311018) protein is Glucokinase.